The primary structure comprises 581 residues: Chaperonin GroEL 1 (581 aa).

Residues threonine 29–proline 32, aspartate 86–threonine 90, glycine 413, and aspartate 492 contribute to the ATP site. Residues proline 522–methionine 543 are disordered. Over residues glycine 531 to methionine 543 the composition is skewed to gly residues.

It belongs to the chaperonin (HSP60) family. Forms a cylinder of 14 subunits composed of two heptameric rings stacked back-to-back. Interacts with the co-chaperonin GroES.

The protein resides in the cytoplasm. It carries out the reaction ATP + H2O + a folded polypeptide = ADP + phosphate + an unfolded polypeptide.. Together with its co-chaperonin GroES, plays an essential role in assisting protein folding. The GroEL-GroES system forms a nano-cage that allows encapsulation of the non-native substrate proteins and provides a physical environment optimized to promote and accelerate protein folding. This is Chaperonin GroEL 1 from Prochlorococcus marinus (strain MIT 9215).